A 218-amino-acid chain; its full sequence is MAATLGFRDLGLIDYETAWHAMKRFTDERGREAADEVWLVQHPPVFTQGQSGKAEHLLLPGNIPVVQVDRGGQVTYHGPGQLVAYLMLDVRRLGFGVRDLVTRIENTLIALLADYGVKAAAKADAPGVYVDGAKIASLGLRIRNGCSFHGLALNVDMDLEPFRRINPCGYAGLAMTQLSDQAGQIEFSEVSARLRAQLVKHLDYAEQATLTGGINHYD.

The BPL/LPL catalytic domain occupies 31–206; sequence REAADEVWLV…QLVKHLDYAE (176 aa). Substrate-binding positions include 70 to 77, 137 to 139, and 150 to 152; these read RGGQVTYH, SLG, and GLA. Cys-168 serves as the catalytic Acyl-thioester intermediate.

Belongs to the LipB family.

Its subcellular location is the cytoplasm. It catalyses the reaction octanoyl-[ACP] + L-lysyl-[protein] = N(6)-octanoyl-L-lysyl-[protein] + holo-[ACP] + H(+). It functions in the pathway protein modification; protein lipoylation via endogenous pathway; protein N(6)-(lipoyl)lysine from octanoyl-[acyl-carrier-protein]: step 1/2. Functionally, catalyzes the transfer of endogenously produced octanoic acid from octanoyl-acyl-carrier-protein onto the lipoyl domains of lipoate-dependent enzymes. Lipoyl-ACP can also act as a substrate although octanoyl-ACP is likely to be the physiological substrate. The chain is Octanoyltransferase from Pseudomonas syringae pv. syringae (strain B728a).